A 391-amino-acid polypeptide reads, in one-letter code: Pyruvate dehydrogenase E1 component subunit alpha type II, mitochondrial (391 aa).

The transit peptide at 1–17 (SNIFKGPTVGSSVVAMS) directs the protein to the mitochondrion. Pyruvate-binding residues include H83, Y109, R110, G148, G156, V158, D187, G188, A189, N216, and Y218. Residues Y109 and R110 each contribute to the thiamine diphosphate site. Thiamine diphosphate is bound by residues G156, V158, D187, G188, A189, and N216. D187 lines the Mg(2+) pocket. The Mg(2+) site is built by N216 and Y218. H283 is a binding site for thiamine diphosphate. A phosphoserine mark is found at S284 and S291.

In terms of assembly, heterotetramer of two PDHA2 and two PDHB subunits. The heterotetramer interacts with DLAT, and is part of the multimeric pyruvate dehydrogenase complex that contains multiple copies of pyruvate dehydrogenase (E1), dihydrolipoamide acetyltransferase (DLAT, E2) and lipoamide dehydrogenase (DLD, E3). It depends on thiamine diphosphate as a cofactor. Mg(2+) serves as cofactor.

The protein localises to the mitochondrion matrix. It carries out the reaction N(6)-[(R)-lipoyl]-L-lysyl-[protein] + pyruvate + H(+) = N(6)-[(R)-S(8)-acetyldihydrolipoyl]-L-lysyl-[protein] + CO2. Pyruvate dehydrogenase activity is inhibited by phosphorylation of PDHA2; it is reactivated by dephosphorylation. Its function is as follows. The pyruvate dehydrogenase complex catalyzes the overall conversion of pyruvate to acetyl-CoA and CO(2), and thereby links the glycolytic pathway to the tricarboxylic cycle. The sequence is that of Pyruvate dehydrogenase E1 component subunit alpha type II, mitochondrial from Ascaris suum (Pig roundworm).